The chain runs to 489 residues: Glycogen synthase (489 aa).

Arginine 20 serves as a coordination point for ADP-alpha-D-glucose.

Belongs to the glycosyltransferase 1 family. Bacterial/plant glycogen synthase subfamily.

The catalysed reaction is [(1-&gt;4)-alpha-D-glucosyl](n) + ADP-alpha-D-glucose = [(1-&gt;4)-alpha-D-glucosyl](n+1) + ADP + H(+). It participates in glycan biosynthesis; glycogen biosynthesis. Functionally, synthesizes alpha-1,4-glucan chains using ADP-glucose. The sequence is that of Glycogen synthase from Chlorobium chlorochromatii (strain CaD3).